The primary structure comprises 267 residues: Serine acetyltransferase (267 aa).

The protein belongs to the transferase hexapeptide repeat family.

Its subcellular location is the cytoplasm. It carries out the reaction L-serine + acetyl-CoA = O-acetyl-L-serine + CoA. It functions in the pathway amino-acid biosynthesis; L-cysteine biosynthesis; L-cysteine from L-serine: step 1/2. The polypeptide is Serine acetyltransferase (cysE) (Haemophilus influenzae (strain ATCC 51907 / DSM 11121 / KW20 / Rd)).